Consider the following 284-residue polypeptide: 4-diphosphocytidyl-2-C-methyl-D-erythritol kinase (284 aa).

Residue K14 is part of the active site. Residue 98–108 (PMGGGLGGGSS) coordinates ATP. D140 is a catalytic residue.

This sequence belongs to the GHMP kinase family. IspE subfamily.

The enzyme catalyses 4-CDP-2-C-methyl-D-erythritol + ATP = 4-CDP-2-C-methyl-D-erythritol 2-phosphate + ADP + H(+). Its pathway is isoprenoid biosynthesis; isopentenyl diphosphate biosynthesis via DXP pathway; isopentenyl diphosphate from 1-deoxy-D-xylulose 5-phosphate: step 3/6. Catalyzes the phosphorylation of the position 2 hydroxy group of 4-diphosphocytidyl-2C-methyl-D-erythritol. This chain is 4-diphosphocytidyl-2-C-methyl-D-erythritol kinase, found in Shewanella denitrificans (strain OS217 / ATCC BAA-1090 / DSM 15013).